The primary structure comprises 167 residues: Translationally-controlled tumor protein homolog (167 aa).

In terms of domain architecture, TCTP spans 1 to 167 (MIIYKDIFSN…WKHGIVEEKI (167 aa)). 2 positions are modified to phosphoserine: Ser9 and Ser15.

This sequence belongs to the TCTP family. In terms of assembly, interacts with the 40S and 60S ribosomal subunits. Interacts with microtubules.

It is found in the cytoplasm. The protein localises to the cytoskeleton. The protein resides in the mitochondrion. Its function is as follows. Involved in protein synthesis. Involved in microtubule stabilization. This Saccharomyces cerevisiae (strain ATCC 204508 / S288c) (Baker's yeast) protein is Translationally-controlled tumor protein homolog (TMA19).